A 205-amino-acid polypeptide reads, in one-letter code: Putative 3-methyladenine DNA glycosylase (205 aa).

This sequence belongs to the DNA glycosylase MPG family.

The sequence is that of Putative 3-methyladenine DNA glycosylase from Bacillus thuringiensis (strain Al Hakam).